A 440-amino-acid chain; its full sequence is APO protein 2, chloroplastic (440 aa).

Residues 1 to 62 (MSITYSAISF…SLQLNSRVVL (62 aa)) constitute a chloroplast transit peptide. A compositionally biased stretch (basic and acidic residues) spans 106 to 115 (ARERVKNNKD). The tract at residues 106 to 126 (ARERVKNNKDKPKRPLPPPKN) is disordered. APO domains are found at residues 162 to 247 (ACGW…EIPE) and 332 to 417 (VCGY…VVPE).

Belongs to the APO family.

It localises to the plastid. It is found in the chloroplast. Its function is as follows. May be involved in the stable assembly of several 4Fe-4S cluster-containing complexes of chloroplasts. The protein is APO protein 2, chloroplastic (APO2) of Arabidopsis thaliana (Mouse-ear cress).